Reading from the N-terminus, the 119-residue chain is UPF0102 protein SGR_1878 (119 aa).

Belongs to the UPF0102 family.

The chain is UPF0102 protein SGR_1878 from Streptomyces griseus subsp. griseus (strain JCM 4626 / CBS 651.72 / NBRC 13350 / KCC S-0626 / ISP 5235).